Here is a 169-residue protein sequence, read N- to C-terminus: Lipoprotein signal peptidase (169 aa).

The next 4 helical transmembrane spans lie at Pro-4 to Ile-24, Trp-29 to Thr-49, Trp-70 to Ser-90, and Tyr-101 to Val-121. Catalysis depends on residues Asp-123 and Asp-141. The helical transmembrane segment at Phe-137–Leu-157 threads the bilayer.

This sequence belongs to the peptidase A8 family.

The protein localises to the cell inner membrane. The enzyme catalyses Release of signal peptides from bacterial membrane prolipoproteins. Hydrolyzes -Xaa-Yaa-Zaa-|-(S,diacylglyceryl)Cys-, in which Xaa is hydrophobic (preferably Leu), and Yaa (Ala or Ser) and Zaa (Gly or Ala) have small, neutral side chains.. It functions in the pathway protein modification; lipoprotein biosynthesis (signal peptide cleavage). In terms of biological role, this protein specifically catalyzes the removal of signal peptides from prolipoproteins. This chain is Lipoprotein signal peptidase, found in Yersinia pestis bv. Antiqua (strain Antiqua).